The sequence spans 259 residues: UPF0246 protein PputW619_0896 (259 aa).

It belongs to the UPF0246 family.

The polypeptide is UPF0246 protein PputW619_0896 (Pseudomonas putida (strain W619)).